Here is a 644-residue protein sequence, read N- to C-terminus: Threonine--tRNA ligase (644 aa).

The TGS domain maps to 1 to 61 (MINVTLPDGS…DGDAQVAIIT (61 aa)). The tract at residues 243-536 (DHRKLGKQME…LIESYAGKLP (294 aa)) is catalytic. Residues C336, H387, and H513 each coordinate Zn(2+).

This sequence belongs to the class-II aminoacyl-tRNA synthetase family. As to quaternary structure, homodimer. Requires Zn(2+) as cofactor.

It is found in the cytoplasm. It catalyses the reaction tRNA(Thr) + L-threonine + ATP = L-threonyl-tRNA(Thr) + AMP + diphosphate + H(+). Catalyzes the attachment of threonine to tRNA(Thr) in a two-step reaction: L-threonine is first activated by ATP to form Thr-AMP and then transferred to the acceptor end of tRNA(Thr). Also edits incorrectly charged L-seryl-tRNA(Thr). This Maricaulis maris (strain MCS10) (Caulobacter maris) protein is Threonine--tRNA ligase.